Consider the following 428-residue polypeptide: Aspartate--tRNA(Asp) ligase (428 aa).

E166 contacts L-aspartate. Residues 188–191 are aspartate; sequence QLYK. L-aspartate is bound at residue R210. ATP contacts are provided by residues 210–212, 218–220, and E351; these read RAE and RHL. Residues E351 and S354 each contribute to the Mg(2+) site. L-aspartate-binding residues include S354 and R358. Residue 399 to 402 coordinates ATP; the sequence is GLER.

The protein belongs to the class-II aminoacyl-tRNA synthetase family. Type 2 subfamily. As to quaternary structure, homodimer. Requires Mg(2+) as cofactor.

The protein resides in the cytoplasm. It catalyses the reaction tRNA(Asp) + L-aspartate + ATP = L-aspartyl-tRNA(Asp) + AMP + diphosphate. Catalyzes the attachment of L-aspartate to tRNA(Asp) in a two-step reaction: L-aspartate is first activated by ATP to form Asp-AMP and then transferred to the acceptor end of tRNA(Asp). In Thermoplasma acidophilum (strain ATCC 25905 / DSM 1728 / JCM 9062 / NBRC 15155 / AMRC-C165), this protein is Aspartate--tRNA(Asp) ligase.